We begin with the raw amino-acid sequence, 249 residues long: General transcription factor IIF subunit 2 (249 aa).

An N-acetylalanine modification is found at Ala2. N6-acetyllysine occurs at positions 22, 33, and 137. Ser142 carries the phosphoserine modification. 2 residues coordinate DNA: Gly227 and His229. Ser248 is modified (phosphoserine).

It belongs to the TFIIF beta subunit family. As to quaternary structure, heterodimer of an alpha and a beta subunit. Interacts with HTATSF1 and URI1. Interacts with GPBP1. Interacts with GTF2B (via N-terminus); this interaction is inhibited in presence of GTF2F1. Part of TBP-based Pol II pre-initiation complex (PIC), in which Pol II core assembles with general transcription factors and other specific initiation factors including GTF2E1, GTF2E2, GTF2F1, GTF2F2, TCEA1, ERCC2, ERCC3, GTF2H2, GTF2H3, GTF2H4, GTF2H5, GTF2A1, GTF2A2, GTF2B and TBP; this large multi-subunit PIC complex mediates DNA unwinding and targets Pol II core to the transcription start site where the first phosphodiester bond forms.

The protein resides in the nucleus. In terms of biological role, TFIIF is a general transcription initiation factor that binds to RNA polymerase II and helps to recruit it to the initiation complex in collaboration with TFIIB. The sequence is that of General transcription factor IIF subunit 2 (Gtf2f2) from Mus musculus (Mouse).